The sequence spans 100 residues: NADH-quinone oxidoreductase subunit K (100 aa).

3 helical membrane-spanning segments follow: residues 2-22, 28-48, and 63-83; these read ISLNHYLLLCVILFCIGLFGI, ILMLFFSTEILLNAINIGFVA, and LFIIAIAASEIAVGLGLVVIW.

It belongs to the complex I subunit 4L family. As to quaternary structure, NDH-1 is composed of 14 different subunits. Subunits NuoA, H, J, K, L, M, N constitute the membrane sector of the complex.

It is found in the cell inner membrane. The catalysed reaction is a quinone + NADH + 5 H(+)(in) = a quinol + NAD(+) + 4 H(+)(out). NDH-1 shuttles electrons from NADH, via FMN and iron-sulfur (Fe-S) centers, to quinones in the respiratory chain. The immediate electron acceptor for the enzyme in this species is believed to be ubiquinone. Couples the redox reaction to proton translocation (for every two electrons transferred, four hydrogen ions are translocated across the cytoplasmic membrane), and thus conserves the redox energy in a proton gradient. The protein is NADH-quinone oxidoreductase subunit K of Helicobacter hepaticus (strain ATCC 51449 / 3B1).